A 175-amino-acid polypeptide reads, in one-letter code: Alpha-crystallin B chain (175 aa).

Residue M1 is modified to N-acetylmethionine. 3 positions are modified to phosphoserine: S19, S45, and S59. Residues 56 to 164 (RAPSWIDTGL…PERTIPITRE (109 aa)) enclose the sHSP domain. Position 83 (H83) interacts with Zn(2+). K92 carries the N6-acetyllysine modification. Positions 104, 106, 111, and 119 each coordinate Zn(2+). The interval 145–175 (VNGPRKQASGPERTIPITREEKPAVTAAPKK) is disordered. K166 carries the post-translational modification N6-acetyllysine. O-linked (GlcNAc) threonine glycosylation is present at T170.

The protein belongs to the small heat shock protein (HSP20) family. As to quaternary structure, heteromer composed of three CRYAA and one CRYAB subunits. Aggregates with homologous proteins, including the small heat shock protein HSPB1, to form large heteromeric complexes. Inter-subunit bridging via zinc ions enhances stability, which is crucial as there is no protein turn over in the lens. Interacts with HSPBAP1 and TTN/titin. Interacts with TMEM109; in the cellular response to DNA damage. Interacts with DES; binds rapidly during early stages of DES filament assembly and a reduced binding seen in the later stages. Interacts with TMED10; the interaction mediates the translocation from the cytoplasm into the ERGIC (endoplasmic reticulum-Golgi intermediate compartment) and thereby secretion. Interacts with ATP6V1A and with MTOR, forming a ternary complex. In terms of tissue distribution, lens as well as other tissues.

The protein localises to the cytoplasm. It localises to the nucleus. Its subcellular location is the secreted. It is found in the lysosome. In terms of biological role, may contribute to the transparency and refractive index of the lens. Has chaperone-like activity, preventing aggregation of various proteins under a wide range of stress conditions. In lens epithelial cells, stabilizes the ATP6V1A protein, preventing its degradation by the proteasome. The protein is Alpha-crystallin B chain (CRYAB) of Mesocricetus auratus (Golden hamster).